The chain runs to 142 residues: Large ribosomal subunit protein uL13 (142 aa).

This sequence belongs to the universal ribosomal protein uL13 family. In terms of assembly, part of the 50S ribosomal subunit.

In terms of biological role, this protein is one of the early assembly proteins of the 50S ribosomal subunit, although it is not seen to bind rRNA by itself. It is important during the early stages of 50S assembly. The polypeptide is Large ribosomal subunit protein uL13 (Francisella tularensis subsp. holarctica (strain FTNF002-00 / FTA)).